The chain runs to 393 residues: Translation initiation factor eIF2B subunit beta (393 aa).

The disordered stretch occupies residues 105-125; the sequence is VSSSNSSSPSQKRDIPSNEKL. Ser-106, Ser-108, and Ser-112 each carry phosphoserine.

The protein belongs to the eIF-2B alpha/beta/delta subunits family. In terms of assembly, component of the translation initiation factor 2B (eIF2B) complex which is a heterodecamer of two sets of five different subunits: alpha, beta, gamma, delta and epsilon. Subunits alpha, beta and delta comprise a regulatory subcomplex and subunits epsilon and gamma comprise a catalytic subcomplex. Within the complex, the hexameric regulatory complex resides at the center, with the two heterodimeric catalytic subcomplexes bound on opposite sides.

The protein resides in the cytoplasm. It localises to the cytosol. Acts as a component of the translation initiation factor 2B (eIF2B) complex, which catalyzes the exchange of GDP for GTP on the eukaryotic initiation factor 2 (eIF2) complex gamma subunit. Its guanine nucleotide exchange factor activity is repressed when bound to eIF2 complex phosphorylated on the alpha subunit, thereby limiting the amount of methionyl-initiator methionine tRNA available to the ribosome and consequently global translation is repressed. The protein is Translation initiation factor eIF2B subunit beta (tif222) of Schizosaccharomyces pombe (strain 972 / ATCC 24843) (Fission yeast).